The sequence spans 144 residues: Deoxyuridine 5'-triphosphate nucleotidohydrolase (144 aa).

Residues 63-65, asparagine 76, and 80-82 each bind substrate; these read RSG and TID.

It belongs to the dUTPase family. Mg(2+) is required as a cofactor.

It catalyses the reaction dUTP + H2O = dUMP + diphosphate + H(+). Its pathway is pyrimidine metabolism; dUMP biosynthesis; dUMP from dCTP (dUTP route): step 2/2. Functionally, this enzyme is involved in nucleotide metabolism: it produces dUMP, the immediate precursor of thymidine nucleotides and it decreases the intracellular concentration of dUTP so that uracil cannot be incorporated into DNA. This chain is Deoxyuridine 5'-triphosphate nucleotidohydrolase, found in Porphyromonas gingivalis (strain ATCC 33277 / DSM 20709 / CIP 103683 / JCM 12257 / NCTC 11834 / 2561).